The primary structure comprises 426 residues: Gamma-glutamyl phosphate reductase (426 aa).

Belongs to the gamma-glutamyl phosphate reductase family.

Its subcellular location is the cytoplasm. The enzyme catalyses L-glutamate 5-semialdehyde + phosphate + NADP(+) = L-glutamyl 5-phosphate + NADPH + H(+). Its pathway is amino-acid biosynthesis; L-proline biosynthesis; L-glutamate 5-semialdehyde from L-glutamate: step 2/2. In terms of biological role, catalyzes the NADPH-dependent reduction of L-glutamate 5-phosphate into L-glutamate 5-semialdehyde and phosphate. The product spontaneously undergoes cyclization to form 1-pyrroline-5-carboxylate. The sequence is that of Gamma-glutamyl phosphate reductase from Deinococcus geothermalis (strain DSM 11300 / CIP 105573 / AG-3a).